Reading from the N-terminus, the 416-residue chain is LysM domain-containing GPI-anchored protein 1 (416 aa).

An N-terminal signal peptide occupies residues Met1–Ala27. 4 disulfides stabilise this stretch: Cys34–Cys100, Cys40–Cys163, Cys98–Cys161, and Cys100–Cys163. Residue Asn37 is glycosylated (N-linked (GlcNAc...) asparagine). A LysM 1 domain is found at Thr110 to Ile157. N-linked (GlcNAc...) asparagine glycosylation occurs at Asn165. The LysM 2 domain occupies Leu176–Val219. 2 cysteine pairs are disulfide-bonded: Cys224-Cys256 and Cys251-Cys279. An N-linked (GlcNAc...) asparagine glycan is attached at Asn241. 3 N-linked (GlcNAc...) asparagine glycosylation sites follow: Asn288, Asn299, and Asn310. A disordered region spans residues Asp356–Leu376. Ala391 carries the GPI-anchor amidated alanine lipid modification. Residues Ser392–Ser416 constitute a propeptide, removed in mature form.

Interacts with peptidoglycans.

It is found in the cell membrane. The protein resides in the secreted. Required as a cell surface receptor for peptidoglycan (PGN) elicitor signaling leading to innate immunity. Plays an essential role in detecting PGNs and restricting bacterial growth (of Pseudomonas syringae pv. tomato DC3000 for example). In Arabidopsis thaliana (Mouse-ear cress), this protein is LysM domain-containing GPI-anchored protein 1 (LYM1).